Consider the following 515-residue polypeptide: 2-isopropylmalate synthase (515 aa).

The 263-residue stretch at 5–267 (VIIFDTTLRD…RTGINHEEIH (263 aa)) folds into the Pyruvate carboxyltransferase domain. Residues aspartate 14, histidine 202, histidine 204, and asparagine 238 each contribute to the Mn(2+) site. The interval 392–515 (KLNYLSVQSG…EMKQKKIATV (124 aa)) is regulatory domain.

This sequence belongs to the alpha-IPM synthase/homocitrate synthase family. LeuA type 1 subfamily. In terms of assembly, homodimer. Mn(2+) is required as a cofactor.

Its subcellular location is the cytoplasm. It catalyses the reaction 3-methyl-2-oxobutanoate + acetyl-CoA + H2O = (2S)-2-isopropylmalate + CoA + H(+). It functions in the pathway amino-acid biosynthesis; L-leucine biosynthesis; L-leucine from 3-methyl-2-oxobutanoate: step 1/4. In terms of biological role, catalyzes the condensation of the acetyl group of acetyl-CoA with 3-methyl-2-oxobutanoate (2-ketoisovalerate) to form 3-carboxy-3-hydroxy-4-methylpentanoate (2-isopropylmalate). The chain is 2-isopropylmalate synthase from Vibrio vulnificus (strain CMCP6).